Consider the following 246-residue polypeptide: Small ribosomal subunit protein uS2 (246 aa).

Belongs to the universal ribosomal protein uS2 family.

This chain is Small ribosomal subunit protein uS2, found in Burkholderia pseudomallei (strain 668).